The following is a 362-amino-acid chain: MTNYNFSAGPGVLPTPVLTKIKNEFIKNEFTHMSIIEISHRSTQFEEIINSAEERLRDLMNISDDYGVAFIQGGGSTQFEMLPLNFANNKNRIAVLDSGNFASKAAQAAVTIGKQATILDSSKVDHYHHLPMLSTDFNADEYDYLHLTTNNTIEGATYHQSILPKTVGRLTADMSSNILAEPYDVNDFDAIFAGAQKNLGPAGVTVAIVKKDWLKEQNIENVGSMLRYQNYLDKHSMYNTPPVFSIYALNLVLEWVQEQGGVDSMYAQNIEKSSKLYDYLDNSTFYHALVDESARSLTNVVFTTADLERDQAIAKDATKEGLFNLSGHRSVGGFRASLYNAQPIEAVDALITFLKKAENNYK.

Arginine 41 provides a ligand contact to L-glutamate. Pyridoxal 5'-phosphate contacts are provided by residues 75–76, phenylalanine 101, threonine 152, aspartate 173, and glutamine 196; that span reads GS. The residue at position 197 (lysine 197) is an N6-(pyridoxal phosphate)lysine. 239–240 contributes to the pyridoxal 5'-phosphate binding site; the sequence is NT.

This sequence belongs to the class-V pyridoxal-phosphate-dependent aminotransferase family. SerC subfamily. Homodimer. It depends on pyridoxal 5'-phosphate as a cofactor.

It localises to the cytoplasm. It carries out the reaction O-phospho-L-serine + 2-oxoglutarate = 3-phosphooxypyruvate + L-glutamate. The enzyme catalyses 4-(phosphooxy)-L-threonine + 2-oxoglutarate = (R)-3-hydroxy-2-oxo-4-phosphooxybutanoate + L-glutamate. Its pathway is amino-acid biosynthesis; L-serine biosynthesis; L-serine from 3-phospho-D-glycerate: step 2/3. Its function is as follows. Catalyzes the reversible conversion of 3-phosphohydroxypyruvate to phosphoserine and of 3-hydroxy-2-oxo-4-phosphonooxybutanoate to phosphohydroxythreonine. This is Phosphoserine aminotransferase from Leuconostoc mesenteroides subsp. mesenteroides (strain ATCC 8293 / DSM 20343 / BCRC 11652 / CCM 1803 / JCM 6124 / NCDO 523 / NBRC 100496 / NCIMB 8023 / NCTC 12954 / NRRL B-1118 / 37Y).